The following is a 141-amino-acid chain: Photosystem I reaction center subunit IV A, chloroplastic (141 aa).

A chloroplast-targeting transit peptide spans 1–49; that stretch reads MASCNMASAASNFLVATPNVASNTNTSRTTMLFFSSKNYGSTAPRLVVR. Positions 57 to 73 are enriched in low complexity; that stretch reads PAAAATAEPAEAPVKAA. Residues 57–83 are disordered; that stretch reads PAAAATAEPAEAPVKAAKPPPIGPKRG.

Belongs to the PsaE family. In terms of processing, 2 isoforms exists (ratio 1:1). With or without the N-terminal alanine.

Its subcellular location is the plastid. The protein resides in the chloroplast thylakoid membrane. Stabilizes the interaction between PsaC and the PSI core, assists the docking of the ferredoxin to PSI and interacts with ferredoxin-NADP oxidoreductase. This chain is Photosystem I reaction center subunit IV A, chloroplastic (PSAEA), found in Nicotiana sylvestris (Wood tobacco).